The chain runs to 353 residues: UPF0283 membrane protein YcjF (353 aa).

Residues Met1–Pro19 are compositionally biased toward basic and acidic residues. The tract at residues Met1 to Asp48 is disordered. Over Met1–Lys69 the chain is Periplasmic. The chain crosses the membrane as a helical span at residues Met70–Thr90. Over Met91–Trp99 the chain is Cytoplasmic. The helical transmembrane segment at Val100–Val120 threads the bilayer. Over Thr121 to Ala212 the chain is Periplasmic. The chain crosses the membrane as a helical span at residues Glu213–Trp233. Residues Arg234–Lys353 lie on the Cytoplasmic side of the membrane.

Belongs to the UPF0283 family.

Its subcellular location is the cell inner membrane. The chain is UPF0283 membrane protein YcjF (ycjF) from Salmonella typhi.